Consider the following 235-residue polypeptide: MPKLSKRITGLLAKVEDRVYQPLEAIQLVKENATAKFDETIEAHVRLGIDPKYTDQQLRTTVALPQGTGQSVRIAVISRGEKLAEAKTAGAELAGDDDLVESIGKGQMDFDLLIATPDMMPKVAKLGRVLGPRGLMPNPKAGTVTTDLAAAIKEFKAGKLEFRADRAGIVHVRFGKASFSADALLENLKTLQETIDRNKPSGAKGRYWKSLYITSTMGPSVEVDVTALQDLEEDA.

Belongs to the universal ribosomal protein uL1 family. As to quaternary structure, part of the 50S ribosomal subunit.

Its function is as follows. Binds directly to 23S rRNA. The L1 stalk is quite mobile in the ribosome, and is involved in E site tRNA release. In terms of biological role, protein L1 is also a translational repressor protein, it controls the translation of the L11 operon by binding to its mRNA. The chain is Large ribosomal subunit protein uL1 from Prochlorococcus marinus (strain MIT 9313).